A 21-amino-acid polypeptide reads, in one-letter code: Ferredoxin (21 aa).

Residues lysine 2–proline 21 form the 4Fe-4S ferredoxin-type domain. Positions 10, 13, and 16 each coordinate [4Fe-4S] cluster.

As to quaternary structure, monomer. The cofactor is [4Fe-4S] cluster.

In terms of biological role, ferredoxins are iron-sulfur proteins that transfer electrons in a wide variety of metabolic reactions. This is Ferredoxin (fdxA) from Pyrococcus woesei.